Consider the following 580-residue polypeptide: Frizzled (580 aa).

Residues Met1–Ser17 form the signal peptide. Topologically, residues Ala18–Trp248 are extracellular. The FZ domain maps to Pro48–Glu166. 5 disulfides stabilise this stretch: Cys53–Cys114, Cys61–Cys107, Cys98–Cys134, Cys124–Cys163, and Cys128–Cys151. A glycan (N-linked (GlcNAc...) asparagine) is linked at Asn67. Asn167 carries an N-linked (GlcNAc...) asparagine glycan. A helical transmembrane segment spans residues Val249–Ile269. Residues Asp270–Arg279 are Cytoplasmic-facing. Residues Ala280 to Gly300 form a helical membrane-spanning segment. The Extracellular segment spans residues Ala301–Ala342. Residues Leu343–Leu363 traverse the membrane as a helical segment. The Cytoplasmic segment spans residues Ala364 to His379. A helical membrane pass occupies residues Leu380–Ala400. Residues Lys401–Phe424 are Extracellular-facing. A helical membrane pass occupies residues Leu425–Ile445. At Ser446–Arg470 the chain is on the cytoplasmic side. A helical transmembrane segment spans residues Ile471 to Tyr491. The Extracellular segment spans residues Glu492–Gln531. Residues Ile532 to Tyr552 form a helical membrane-spanning segment. The Cytoplasmic segment spans residues Ser553–Val580. A Lys-Thr-X-X-X-Trp motif, mediates interaction with the PDZ domain of Dvl family members motif is present at residues Lys555–Trp560. A PDZ-binding motif is present at residues Ala578–Val580.

It belongs to the G-protein coupled receptor Fz/Smo family.

The protein resides in the cell membrane. In terms of biological role, receptor for Wnt proteins. Most of frizzled receptors are coupled to the beta-catenin canonical signaling pathway, which leads to the activation of disheveled proteins, inhibition of GSK-3 kinase, nuclear accumulation of beta-catenin and activation of Wnt target genes. A second signaling pathway involving PKC and calcium fluxes has been seen for some family members, but it is not yet clear if it represents a distinct pathway or if it can be integrated in the canonical pathway, as PKC seems to be required for Wnt-mediated inactivation of GSK-3 kinase. Both pathways seem to involve interactions with G-proteins. Required to coordinate the cytoskeletons of epidermal cells to produce a parallel array of cuticular hairs and bristles. The protein is Frizzled (fz) of Drosophila virilis (Fruit fly).